We begin with the raw amino-acid sequence, 507 residues long: Cobyric acid synthase (507 aa).

The 196-residue stretch at 273 to 468 folds into the GATase cobBQ-type domain; it reads RPVIAVIAYP…LHGMFEDPAV (196 aa). C354 (nucleophile) is an active-site residue. H460 is a catalytic residue.

The protein belongs to the CobB/CobQ family. CobQ subfamily.

Its pathway is cofactor biosynthesis; adenosylcobalamin biosynthesis. Its function is as follows. Catalyzes amidations at positions B, D, E, and G on adenosylcobyrinic A,C-diamide. NH(2) groups are provided by glutamine, and one molecule of ATP is hydrogenolyzed for each amidation. The sequence is that of Cobyric acid synthase from Polaromonas sp. (strain JS666 / ATCC BAA-500).